The following is a 741-amino-acid chain: Eukaryotic peptide chain release factor GTP-binding subunit (741 aa).

The interval 5-135 is several sort of repeats; that stretch reads QQQQQQFNAN…SYNNNNNYNN (131 aa). Low complexity predominate over residues 59 to 161; sequence QQFGQYGQQQ…DQQQETGSGQ (103 aa). 2 disordered regions span residues 59 to 186 and 199 to 264; these read QQFG…KKVL and IVTK…KTEA. The segment at 162 to 311 is charged; sequence MSLEDYQKQQ…EQIDASIVND (150 aa). Composition is skewed to basic and acidic residues over residues 166-175 and 202-241; these read DYQKQQKESL and KKKE…ESKV. Residues 316–541 form the tr-type G domain; it reads KDHMSIIFMG…YLDSMPLAVR (226 aa). Residues 325–332 form a G1 region; the sequence is GHVDAGKS. Residue 325-332 participates in GTP binding; that stretch reads GHVDAGKS. Residues 381–385 form a G2 region; sequence GKTIE. Thr-399 carries the post-translational modification Phosphothreonine. Positions 402–405 are G3; the sequence is DAPG. GTP is bound by residues 402-406 and 464-467; these read DAPGH and NKMD. Residues 464–467 are G4; sequence NKMD. The interval 505-507 is G5; that stretch reads SGY.

The protein belongs to the TRAFAC class translation factor GTPase superfamily. Classic translation factor GTPase family. ERF3 subfamily.

It is found in the cytoplasm. Its function is as follows. Involved in translation termination. Stimulates the activity of ERF1. Binds guanine nucleotides. This Ogataea pini (Yeast) protein is Eukaryotic peptide chain release factor GTP-binding subunit (SUP2).